The primary structure comprises 250 residues: 2,3-bisphosphoglycerate-dependent phosphoglycerate mutase (250 aa).

Substrate contacts are provided by residues 8–15 (RHGESEWN), 21–22 (TG), Arg-60, 87–90 (ERHY), Lys-98, 114–115 (RR), and 183–184 (GN). Residue His-9 is the Tele-phosphohistidine intermediate of the active site. Glu-87 serves as the catalytic Proton donor/acceptor.

The protein belongs to the phosphoglycerate mutase family. BPG-dependent PGAM subfamily.

The catalysed reaction is (2R)-2-phosphoglycerate = (2R)-3-phosphoglycerate. It participates in carbohydrate degradation; glycolysis; pyruvate from D-glyceraldehyde 3-phosphate: step 3/5. Catalyzes the interconversion of 2-phosphoglycerate and 3-phosphoglycerate. This is 2,3-bisphosphoglycerate-dependent phosphoglycerate mutase from Borrelia duttonii (strain Ly).